Consider the following 192-residue polypeptide: UPF0301 protein Bcen_0382 (192 aa).

The protein belongs to the UPF0301 (AlgH) family.

This chain is UPF0301 protein Bcen_0382, found in Burkholderia orbicola (strain AU 1054).